Reading from the N-terminus, the 103-residue chain is NADH-quinone oxidoreductase subunit K (103 aa).

A run of 3 helical transmembrane segments spans residues 5-25, 32-52, and 66-86; these read VPTSYYLALSGVLFALGLIGV, ILIFLSVELMLNAANIALVAF, and FIVMTLAAAEVAIGLAIIVAI.

This sequence belongs to the complex I subunit 4L family. NDH-1 is composed of 15 different subunits. Subunits NuoA, H, J, K, L, M, N constitute the membrane sector of the complex.

The protein resides in the cell membrane. The catalysed reaction is a quinone + NADH + 5 H(+)(in) = a quinol + NAD(+) + 4 H(+)(out). In terms of biological role, NDH-1 shuttles electrons from NADH, via FMN and iron-sulfur (Fe-S) centers, to quinones in the respiratory chain. The immediate electron acceptor for the enzyme in this species is believed to be a menaquinone. Couples the redox reaction to proton translocation (for every two electrons transferred, four hydrogen ions are translocated across the cytoplasmic membrane), and thus conserves the redox energy in a proton gradient. This Deinococcus radiodurans (strain ATCC 13939 / DSM 20539 / JCM 16871 / CCUG 27074 / LMG 4051 / NBRC 15346 / NCIMB 9279 / VKM B-1422 / R1) protein is NADH-quinone oxidoreductase subunit K.